Consider the following 799-residue polypeptide: MLRGQRLGQLGWHRPAAGLGSLMTSLMLACASAASCREVCCPVGPSGLRCTRAGSLDTLRGLRGAGNLTELYVENQQHLQRLEFEDLQGLGELRSLTIVKSGLRFVAPDAFRFTPRLSHLNLSSNALESLSWKTVQGLSLQDLTLSGNPLHCSCALFWLQRWEQEGLCGVHTQTLHDSGPGDQFLPLGHNTSCGVPTVKIQMPNDSVEVGDDVFLQCQVEGLALQQADWILTELEGAATVKKFGDLPSLGLILVNVTSDLNKKNVTCWAENDVGRAEVSVQVSVSFPASVHLGLAVEQHHWCIPFSVDGQPAPSLRWLFNGSVLNETSFIFTQFLESALTNETMRHGCLRLNQPTHVNNGNYTLLAANPYGQAAASVMAAFMDNPFEFNPEDPIPVSFSPVDGNSTSRDPVEKKDETPFGVSVAVGLAVSAALFLSALLLVLNKCGQRSKFGINRPAVLAPEDGLAMSLHFMTLGGSSLSPTEGKGSGLQGHIMENPQYFSDTCVHHIKRQDIILKWELGEGAFGKVFLAECYNLLNDQDKMLVAVKALKEASENARQDFQREAELLTMLQHQHIVRFFGVCTEGGPLLMVFEYMRHGDLNRFLRSHGPDAKLLAGGEDVAPGPLGLGQLLAVASQVAAGMVYLASLHFVHRDLATRNCLVGQGLVVKIGDFGMSRDIYSTDYYRVGGRTMLPIRWMPPESILYRKFSTESDVWSFGVVLWEIFTYGKQPWYQLSNTEAIECITQGRELERPRACPPDVYAIMRGCWQREPQQRLSMKDVHARLQALAQAPPSYLDVLG.

The signal sequence occupies residues 1–33 (MLRGQRLGQLGWHRPAAGLGSLMTSLMLACASA). At 34–420 (ASCREVCCPV…VEKKDETPFG (387 aa)) the chain is on the extracellular side. Cystine bridges form between cysteine 36-cysteine 41 and cysteine 40-cysteine 50. N-linked (GlcNAc...) asparagine glycosylation is present at asparagine 67. LRR repeat units lie at residues 90–113 (LGELRSLTIVKSGLRFVAPDAFRF) and 116–137 (RLSHLNLSSNALESLSWKTVQG). Asparagine 121, asparagine 190, asparagine 204, asparagine 255, asparagine 264, asparagine 320, asparagine 325, asparagine 341, asparagine 361, and asparagine 404 each carry an N-linked (GlcNAc...) asparagine glycan. Residues 148 to 219 (NPLHCSCALF…GDDVFLQCQV (72 aa)) enclose the LRRCT domain. Residues cysteine 154 and cysteine 193 are joined by a disulfide bond. 2 Ig-like C2-type domains span residues 196-285 (PTVK…VSVS) and 205-368 (DSVE…LAAN). 2 disulfide bridges follow: cysteine 217-cysteine 267 and cysteine 302-cysteine 348. A helical transmembrane segment spans residues 421 to 441 (VSVAVGLAVSAALFLSALLLV). The Cytoplasmic portion of the chain corresponds to 442–799 (LNKCGQRSKF…APPSYLDVLG (358 aa)). Residues 472–493 (MTLGGSSLSPTEGKGSGLQGHI) are interaction with SQSTM1. The residue at position 499 (tyrosine 499) is a Phosphotyrosine; by autocatalysis. The Protein kinase domain occupies 513–784 (IILKWELGEG…LSMKDVHARL (272 aa)). ATP is bound by residues 519–527 (LGEGAFGKV) and lysine 547. The active-site Proton acceptor is the aspartate 653. Tyrosine 679, tyrosine 683, tyrosine 684, and tyrosine 794 each carry phosphotyrosine; by autocatalysis.

This sequence belongs to the protein kinase superfamily. Tyr protein kinase family. Insulin receptor subfamily. In terms of assembly, exists in a dynamic equilibrium between monomeric (low affinity) and dimeric (high affinity) structures. Homodimerization is induced by binding of a NGF dimer. Found in a complex, at least composed of KIDINS220, MAGI2, NTRK1 and RAPGEF2; the complex is mainly formed at late endosomes in a nerve growth factor (NGF)-dependent manner. Interacts with RAPGEF2; the interaction is strengthened after NGF stimulation. Interacts with SQSTM1; bridges NTRK1 to NGFR. Forms a ternary complex with NGFR and KIDINS220; this complex is affected by the expression levels of KIDINS220 and an increase in KIDINS220 expression leads to a decreased association of NGFR and NTRK1. Interacts (phosphorylated upon activation by NGF) with SHC1; mediates SHC1 phosphorylation and activation. Interacts (phosphorylated upon activation by NGF) with PLCG1; mediates PLCG1 phosphorylation and activation. Interacts (phosphorylated) with SH2B1 and SH2B2. Interacts with GRB2. Interacts with PIK3R1. Interacts with FRS2. Interacts with SORT1; may regulate NTRK1 anterograde axonal transport. Interacts with SH2D1A; regulates NTRK1. Interacts with NRADD. Interacts with RAB7A. Interacts with PTPRS. Interacts with USP36; USP36 does not deubiquitinate NTRK1. Interacts with GGA3. Interacts with TSPAN1; this interaction promotes NTRK1 stability. Post-translationally, ligand-mediated autophosphorylation. Interaction with SQSTM1 is phosphotyrosine-dependent. Autophosphorylation at Tyr-499 mediates interaction and phosphorylation of SHC1. In terms of processing, N-glycosylated. Ubiquitinated. Undergoes polyubiquitination upon activation; regulated by NGFR. Ubiquitination by NEDD4L leads to degradation. Ubiquitination regulates the internalization of the receptor.

Its subcellular location is the cell membrane. It is found in the early endosome membrane. The protein localises to the late endosome membrane. It localises to the recycling endosome membrane. It catalyses the reaction L-tyrosyl-[protein] + ATP = O-phospho-L-tyrosyl-[protein] + ADP + H(+). With respect to regulation, the pro-survival signaling effect of NTRK1 in neurons requires its endocytosis into signaling early endosomes and its retrograde axonal transport. This is regulated by different proteins including CFL1, RAC1 and SORT1. NTF3 is unable to induce this signaling probably due to the lability of the NTF3-NTRK1 complex in endosomes. SH2D1A inhibits the autophosphorylation of the receptor, and alters the recruitment and activation of downstream effectors and signaling cascades. Regulated by NGFR. Functionally, receptor tyrosine kinase involved in the development and the maturation of the central and peripheral nervous systems through regulation of proliferation, differentiation and survival of sympathetic and nervous neurons. High affinity receptor for NGF which is its primary ligand, it can also bind and be activated by NTF3/neurotrophin-3. However, NTF3 only supports axonal extension through NTRK1 but has no effect on neuron survival. Upon dimeric NGF ligand-binding, undergoes homodimerization, autophosphorylation and activation. Recruits, phosphorylates and/or activates several downstream effectors including SHC1, FRS2, SH2B1, SH2B2 and PLCG1 that regulate distinct overlapping signaling cascades driving cell survival and differentiation. Through SHC1 and FRS2 activates a GRB2-Ras-MAPK cascade that regulates cell differentiation and survival. Through PLCG1 controls NF-Kappa-B activation and the transcription of genes involved in cell survival. Through SHC1 and SH2B1 controls a Ras-PI3 kinase-AKT1 signaling cascade that is also regulating survival. In absence of ligand and activation, may promote cell death, making the survival of neurons dependent on trophic factors. The polypeptide is High affinity nerve growth factor receptor (Ntrk1) (Mus musculus (Mouse)).